Reading from the N-terminus, the 397-residue chain is Cathepsin E-A (397 aa).

The first 16 residues, 1–16 (MRQILVLLLFATLVYG), serve as a signal peptide directing secretion. Residues 17–52 (LIRVPLKRQKSIRKTLKEKGKLSHIWTQQGIDMVQY) constitute a propeptide, activation peptide. The 312-residue stretch at 74–385 (YFGEISVGTP…DRGNNRVGLA (312 aa)) folds into the Peptidase A1 domain. An N-linked (GlcNAc...) asparagine glycan is attached at Asn86. Residue Asp92 is part of the active site. A disulfide bridge connects residues Cys105 and Cys110. Asn130 is a glycosylation site (N-linked (GlcNAc...) asparagine). An intrachain disulfide couples Cys268 to Cys272. Residue Asp277 is part of the active site. The cysteines at positions 310 and 344 are disulfide-linked.

This sequence belongs to the peptidase A1 family. In terms of assembly, homodimer; disulfide-linked. In terms of processing, glycosylated. Contains high mannose-type oligosaccharide. In terms of tissue distribution, expressed predominantly in the larval foregut and the anterior and posterior adult stomach.

Its subcellular location is the endosome. It carries out the reaction Similar to cathepsin D, but slightly broader specificity.. May have a role in immune function. Probably involved in the processing of antigenic peptides during MHC class II-mediated antigen presentation. This chain is Cathepsin E-A (ctse-a), found in Xenopus laevis (African clawed frog).